The following is a 785-amino-acid chain: Putative endonuclease MutS2 (785 aa).

335–342 (GPNTGGKT) lines the ATP pocket. The stretch at 513–586 (TAEHNEVDTM…AEKVKAAMKE (74 aa)) forms a coiled coil. A partially complements a deletion for mitomycin C (MMC) resistance and for chromosomal DNA transformation region spans residues 636–785 (KRDFKPGDEV…GSGVTVVELK (150 aa)). The interval 641-681 (PGDEVKVLTFGQKGTLLEKTGGNEWNVQIGILKMKVKEKDL) is KOW region. The Smr domain occupies 710 to 785 (LDLRGERYEN…GSGVTVVELK (76 aa)).

It belongs to the DNA mismatch repair MutS family. MutS2 subfamily. In terms of assembly, binds to ribosomes as a homodimer. Binds to stalled/collided disomes, association is greater in (ribosome-targeted) antibiotic-treated cells (with increased stalling at specific mRNA sites). The clamp domain of one monomer binds the A-site finger, the 23S rRNA of the central protuberance and ribosomal protein uL5 of the leading (stalled) ribosome, while the other monomer binds in a gap between the ribosomal central protuberance and the L1 stalk of the leading ribosome.

Its subcellular location is the cytoplasm. Its function is as follows. Acts as a ribosome collision sensor splitting the ribosome into its 2 subunits. Detects stalled/collided disomes (pairs of ribosomes where the leading ribosome is stalled and a second ribosome has collided with it) which it binds and splits, by an ATP-hydrolysis driven conformational change. Does not seem to have endoribonuclease activity (in the context of ribosome stalling). Acts upstream of the ribosome quality control system (RQC), a ribosome-associated complex that mediates the extraction of incompletely synthesized nascent chains from stalled ribosomes and their subsequent degradation, probably generates substrates for RQC. Does not seem to be involved in mismatch repair or in the prevention of interspecific recombination during DNA transformation. Might be involved in homologous recombination. Putative endonuclease that may be involved in the suppression of homologous recombination and may therefore have a key role in the control of bacterial genetic diversity. The sequence is that of Putative endonuclease MutS2 from Bacillus subtilis (strain 168).